The following is a 149-amino-acid chain: Large-conductance mechanosensitive channel (149 aa).

The next 3 helical transmembrane spans lie at 10–30 (FALK…GAFA), 41–61 (IMPI…MFLI), and 87–107 (GSFI…FMMV).

It belongs to the MscL family. As to quaternary structure, homopentamer.

Its subcellular location is the cell inner membrane. Its function is as follows. Channel that opens in response to stretch forces in the membrane lipid bilayer. May participate in the regulation of osmotic pressure changes within the cell. The sequence is that of Large-conductance mechanosensitive channel from Psychrobacter cryohalolentis (strain ATCC BAA-1226 / DSM 17306 / VKM B-2378 / K5).